Reading from the N-terminus, the 143-residue chain is MAKKIVGYIKLQVPAGKANPSPPIGPALGQRGLNIMEFCKAFNAQTQGMEPGMPIPVVITAYADKSFTFTMKTPPATFLLKKAAGIKSGSAKAHVDKVGKVTRAQLEEIAKTKQADLTAADLDAAVRTIAGSARSMGLEVEGV.

The protein belongs to the universal ribosomal protein uL11 family. In terms of assembly, part of the ribosomal stalk of the 50S ribosomal subunit. Interacts with L10 and the large rRNA to form the base of the stalk. L10 forms an elongated spine to which L12 dimers bind in a sequential fashion forming a multimeric L10(L12)X complex. In terms of processing, one or more lysine residues are methylated.

Functionally, forms part of the ribosomal stalk which helps the ribosome interact with GTP-bound translation factors. This chain is Large ribosomal subunit protein uL11, found in Chromobacterium violaceum (strain ATCC 12472 / DSM 30191 / JCM 1249 / CCUG 213 / NBRC 12614 / NCIMB 9131 / NCTC 9757 / MK).